Reading from the N-terminus, the 951-residue chain is Coiled-coil and C2 domain-containing protein 1A (951 aa).

Disordered stretches follow at residues 80–139, 185–266, 306–346, and 437–491; these read CMRD…LETT, AIDE…RQRD, VDLS…PPPR, and NQDE…TRAQ. Acidic residues predominate over residues 84–104; the sequence is PDEDEEEGTDEDDLEADDDLL. A phosphothreonine mark is found at Thr92, Thr204, and Thr206. Positions 201-210 are enriched in low complexity; that stretch reads PASTPTYSPA. Phosphoserine; by CDK1 is present on Ser208. Phosphoserine occurs at positions 253 and 324. The span at 311–333 shows a compositional bias: pro residues; it reads LPPPPDQLPPDPPSPPSQPPTPA. A coiled-coil region spans residues 346–392; it reads RTLLEALEQRMERYQVAAAQAKSKGDQRKARMHERIVKQYQDAIRAH. Ser455 is subject to Phosphoserine. Residues 475-488 are compositionally biased toward low complexity; that stretch reads SAPTAKAPPKATST. Residues 484-517 adopt a coiled-coil conformation; sequence KATSTRAQQQLAFLEGRKKQLLQAALRAKQKNDV. One can recognise a C2 domain in the interval 637-771; the sequence is RFEQRTFSVI…EIACEVREIL (135 aa). Residues 818 to 841 are disordered; the sequence is TQVAGPKGKAPPVPAPARESGNRS.

Belongs to the CC2D1 family. Post-translationally, phosphorylation on Ser-208 by CDK1 promotes spindle pole localization and association with SCC1/RAD21.

Its subcellular location is the cytoplasm. The protein localises to the nucleus. It is found in the cytoskeleton. It localises to the microtubule organizing center. The protein resides in the centrosome. Its function is as follows. Transcription factor that binds specifically to the DRE (dual repressor element) and represses HTR1A gene transcription in neuronal cells. The combination of calcium and ATP specifically inactivates the binding with FRE. May play a role in the altered regulation of HTR1A associated with anxiety and major depression. Mediates HDAC-independent repression of HTR1A promoter in neuronal cell. Performs essential function in controlling functional maturation of synapses. Plays distinct roles depending on its localization. When cytoplasmic, acts as a scaffold protein in the PI3K/PDK1/AKT pathway. Repressor of HTR1A when nuclear. In the centrosome, regulates spindle pole localization of the cohesin subunit SCC1/RAD21, thereby mediating centriole cohesion during mitosis. This is Coiled-coil and C2 domain-containing protein 1A (CC2D1A) from Homo sapiens (Human).